Reading from the N-terminus, the 107-residue chain is Putidaredoxin (107 aa).

The 2Fe-2S ferredoxin-type domain maps to 2-106 (SKVVYVSHDG…GIVVDVPDRQ (105 aa)). [2Fe-2S] cluster-binding residues include C40, C46, C49, and C87.

It belongs to the adrenodoxin/putidaredoxin family. In terms of assembly, monomer. [2Fe-2S] cluster is required as a cofactor.

Its function is as follows. The oxidation of camphor by cytochrome P450-CAM requires the participation of a flavoprotein, putidaredoxin reductase, and an iron-sulfur protein, putidaredoxin, to mediate the transfer of electrons from NADH to P450 for oxygen activation. The protein is Putidaredoxin (camB) of Pseudomonas putida (Arthrobacter siderocapsulatus).